The following is a 168-amino-acid chain: Photosystem I assembly protein Ycf3 (168 aa).

3 TPR repeats span residues 35–68 (AFTY…EIDP), 72–105 (SYIL…NPFL), and 120–153 (GEQA…TPGN).

It belongs to the Ycf3 family.

It localises to the plastid. The protein resides in the chloroplast thylakoid membrane. Functionally, essential for the assembly of the photosystem I (PSI) complex. May act as a chaperone-like factor to guide the assembly of the PSI subunits. The protein is Photosystem I assembly protein Ycf3 of Nandina domestica (Heavenly bamboo).